The chain runs to 124 residues: Holo-[acyl-carrier-protein] synthase (124 aa).

The Mg(2+) site is built by aspartate 8 and glutamate 55.

Belongs to the P-Pant transferase superfamily. AcpS family. Mg(2+) serves as cofactor.

The protein localises to the cytoplasm. The enzyme catalyses apo-[ACP] + CoA = holo-[ACP] + adenosine 3',5'-bisphosphate + H(+). Functionally, transfers the 4'-phosphopantetheine moiety from coenzyme A to a Ser of acyl-carrier-protein. The sequence is that of Holo-[acyl-carrier-protein] synthase from Desulfovibrio desulfuricans (strain ATCC 27774 / DSM 6949 / MB).